The primary structure comprises 114 residues: Protein S40-2 (114 aa).

A disordered region spans residues 23-50; it reads RYTKLYNSRNDEKKGTRRHETAEKTSPV. Basic and acidic residues predominate over residues 31–45; sequence RNDEKKGTRRHETAE.

It belongs to the senescence regulator S40 family.

Its subcellular location is the cytoplasm. This Arabidopsis thaliana (Mouse-ear cress) protein is Protein S40-2.